Reading from the N-terminus, the 437-residue chain is Branched-chain amino acid transport system 2 carrier protein (437 aa).

12 consecutive transmembrane segments (helical) span residues 9 to 29 (LLAL…IIFP), 43 to 63 (AAFG…VALA), 80 to 100 (AGVA…ATPR), 117 to 137 (GGVP…FLVL), 149 to 169 (VITP…IFAP), 192 to 212 (GYLT…ATAI), 228 to 248 (MIAG…LFYL), 280 to 300 (LLLA…LITA), 308 to 328 (LLPV…LLVA), 335 to 355 (LISL…VLIA), 369 to 389 (VFVP…LGAA), and 404 to 424 (LADQ…LAVV).

This sequence belongs to the branched chain amino acid transporter family.

The protein localises to the cell inner membrane. Its function is as follows. Component of the LIV-II transport system for branched-chain amino acids. BraB is specific for isoleucine, leucine and valine. The LIV-II transport system is coupled to sodium and lithium ions. The chain is Branched-chain amino acid transport system 2 carrier protein (braB) from Pseudomonas aeruginosa (strain ATCC 15692 / DSM 22644 / CIP 104116 / JCM 14847 / LMG 12228 / 1C / PRS 101 / PAO1).